Reading from the N-terminus, the 613-residue chain is Dihydroxy-acid dehydratase (613 aa).

D81 provides a ligand contact to Mg(2+). C122 contacts [2Fe-2S] cluster. Residues D123 and K124 each contribute to the Mg(2+) site. K124 carries the N6-carboxylysine modification. A [2Fe-2S] cluster-binding site is contributed by C197. Residue E493 coordinates Mg(2+). The active-site Proton acceptor is S519.

Belongs to the IlvD/Edd family. Homodimer. The cofactor is [2Fe-2S] cluster. Mg(2+) serves as cofactor.

The enzyme catalyses (2R)-2,3-dihydroxy-3-methylbutanoate = 3-methyl-2-oxobutanoate + H2O. The catalysed reaction is (2R,3R)-2,3-dihydroxy-3-methylpentanoate = (S)-3-methyl-2-oxopentanoate + H2O. Its pathway is amino-acid biosynthesis; L-isoleucine biosynthesis; L-isoleucine from 2-oxobutanoate: step 3/4. It functions in the pathway amino-acid biosynthesis; L-valine biosynthesis; L-valine from pyruvate: step 3/4. In terms of biological role, functions in the biosynthesis of branched-chain amino acids. Catalyzes the dehydration of (2R,3R)-2,3-dihydroxy-3-methylpentanoate (2,3-dihydroxy-3-methylvalerate) into 2-oxo-3-methylpentanoate (2-oxo-3-methylvalerate) and of (2R)-2,3-dihydroxy-3-methylbutanoate (2,3-dihydroxyisovalerate) into 2-oxo-3-methylbutanoate (2-oxoisovalerate), the penultimate precursor to L-isoleucine and L-valine, respectively. The polypeptide is Dihydroxy-acid dehydratase (Corynebacterium glutamicum (strain R)).